Here is a 346-residue protein sequence, read N- to C-terminus: Elongation factor Ts (346 aa).

The tract at residues 80-83 (TDFV) is involved in Mg(2+) ion dislocation from EF-Tu.

The protein belongs to the EF-Ts family.

It localises to the cytoplasm. Associates with the EF-Tu.GDP complex and induces the exchange of GDP to GTP. It remains bound to the aminoacyl-tRNA.EF-Tu.GTP complex up to the GTP hydrolysis stage on the ribosome. The protein is Elongation factor Ts of Streptococcus pyogenes serotype M3 (strain ATCC BAA-595 / MGAS315).